Consider the following 245-residue polypeptide: uncharacterized protein (245 aa).

This is an uncharacterized protein from Frog virus 3 (isolate Goorha) (FV-3).